Reading from the N-terminus, the 215-residue chain is AN1-type zinc finger protein C1271.05c (215 aa).

A compositionally biased stretch (polar residues) spans 116–128 (IPSISKSNLTNPP). The segment at 116–138 (IPSISKSNLTNPPLESEKSSDKA) is disordered. Residues 144 to 193 (ATSRRRCCHPTCTRITLRLAGNCLHCNGRFCAAHRLMEDHDCVALFSLRK) form an AN1-type zinc finger. Zn(2+)-binding residues include C150, C155, C166, C169, C174, H177, H183, and C185.

It is found in the cytoplasm. Its subcellular location is the nucleus. The chain is AN1-type zinc finger protein C1271.05c from Schizosaccharomyces pombe (strain 972 / ATCC 24843) (Fission yeast).